The sequence spans 229 residues: DNA repair protein RecO (229 aa).

Belongs to the RecO family.

Its function is as follows. Involved in DNA repair and RecF pathway recombination. In Legionella pneumophila (strain Corby), this protein is DNA repair protein RecO.